The following is a 375-amino-acid chain: Queuine tRNA-ribosyltransferase (375 aa).

The active-site Proton acceptor is the aspartate 90. Substrate-binding positions include 90-94 (DSGGF), aspartate 144, glutamine 193, and glycine 220. Residues 251 to 257 (GVGTPED) are RNA binding. Aspartate 270 serves as the catalytic Nucleophile. The tract at residues 275-279 (TRNAR) is RNA binding; important for wobble base 34 recognition. Cysteine 308, cysteine 310, cysteine 313, and histidine 339 together coordinate Zn(2+).

The protein belongs to the queuine tRNA-ribosyltransferase family. In terms of assembly, homodimer. Within each dimer, one monomer is responsible for RNA recognition and catalysis, while the other monomer binds to the replacement base PreQ1. It depends on Zn(2+) as a cofactor.

The enzyme catalyses 7-aminomethyl-7-carbaguanine + guanosine(34) in tRNA = 7-aminomethyl-7-carbaguanosine(34) in tRNA + guanine. Its pathway is tRNA modification; tRNA-queuosine biosynthesis. Catalyzes the base-exchange of a guanine (G) residue with the queuine precursor 7-aminomethyl-7-deazaguanine (PreQ1) at position 34 (anticodon wobble position) in tRNAs with GU(N) anticodons (tRNA-Asp, -Asn, -His and -Tyr). Catalysis occurs through a double-displacement mechanism. The nucleophile active site attacks the C1' of nucleotide 34 to detach the guanine base from the RNA, forming a covalent enzyme-RNA intermediate. The proton acceptor active site deprotonates the incoming PreQ1, allowing a nucleophilic attack on the C1' of the ribose to form the product. After dissociation, two additional enzymatic reactions on the tRNA convert PreQ1 to queuine (Q), resulting in the hypermodified nucleoside queuosine (7-(((4,5-cis-dihydroxy-2-cyclopenten-1-yl)amino)methyl)-7-deazaguanosine). This Janthinobacterium sp. (strain Marseille) (Minibacterium massiliensis) protein is Queuine tRNA-ribosyltransferase.